A 243-amino-acid polypeptide reads, in one-letter code: Ribosomal RNA small subunit methyltransferase G (243 aa).

Residues G80, F85, 132–133 (IE), and R151 contribute to the S-adenosyl-L-methionine site.

Belongs to the methyltransferase superfamily. RNA methyltransferase RsmG family.

It is found in the cytoplasm. Its function is as follows. Specifically methylates the N7 position of a guanine in 16S rRNA. This chain is Ribosomal RNA small subunit methyltransferase G, found in Synechococcus sp. (strain CC9902).